The sequence spans 272 residues: Cyanophycinase (272 aa).

Catalysis depends on charge relay system residues S132, E150, and H174.

The protein belongs to the peptidase S51 family.

It carries out the reaction [L-4-(L-arginin-2-N-yl)aspartate](n) + H2O = [L-4-(L-arginin-2-N-yl)aspartate](n-1) + L-4-(L-arginin-2-N-yl)aspartate. Exopeptidase that catalyzes the hydrolytic cleavage of multi-L-arginyl-poly-L-aspartic acid (cyanophycin; a water-insoluble reserve polymer) into aspartate-arginine dipeptides. This Geminocystis herdmanii (strain PCC 6308) (Synechocystis sp. (strain PCC 6308)) protein is Cyanophycinase (cphB).